The following is a 310-amino-acid chain: Ribosomal RNA small subunit methyltransferase H (310 aa).

Residues 32-34, Asp-52, Phe-79, Asp-100, and Gln-107 contribute to the S-adenosyl-L-methionine site; that span reads GGH.

It belongs to the methyltransferase superfamily. RsmH family.

The protein resides in the cytoplasm. The catalysed reaction is cytidine(1402) in 16S rRNA + S-adenosyl-L-methionine = N(4)-methylcytidine(1402) in 16S rRNA + S-adenosyl-L-homocysteine + H(+). In terms of biological role, specifically methylates the N4 position of cytidine in position 1402 (C1402) of 16S rRNA. The sequence is that of Ribosomal RNA small subunit methyltransferase H from Bacillus cereus (strain ATCC 10987 / NRS 248).